Here is a 248-residue protein sequence, read N- to C-terminus: Ribonuclease PH (248 aa).

Phosphate is bound by residues R86 and 124-126; that span reads GTR.

The protein belongs to the RNase PH family. In terms of assembly, homohexameric ring arranged as a trimer of dimers.

The catalysed reaction is tRNA(n+1) + phosphate = tRNA(n) + a ribonucleoside 5'-diphosphate. In terms of biological role, phosphorolytic 3'-5' exoribonuclease that plays an important role in tRNA 3'-end maturation. Removes nucleotide residues following the 3'-CCA terminus of tRNAs; can also add nucleotides to the ends of RNA molecules by using nucleoside diphosphates as substrates, but this may not be physiologically important. Probably plays a role in initiation of 16S rRNA degradation (leading to ribosome degradation) during starvation. This chain is Ribonuclease PH, found in Listeria welshimeri serovar 6b (strain ATCC 35897 / DSM 20650 / CCUG 15529 / CIP 8149 / NCTC 11857 / SLCC 5334 / V8).